Consider the following 338-residue polypeptide: Protein SGT1 homolog (338 aa).

The residue at position 2 (Ala2) is an N-acetylalanine. TPR repeat units follow at residues Ala11–Asp45, Ala46–Ser79, and Ser80–Asp113. The region spanning Gln142 to Glu231 is the CS domain. Residues Leu249–Tyr338 form the SGS domain. Phosphoserine is present on Ser254. Thr257 is subject to Phosphothreonine. Lys268 participates in a covalent cross-link: Glycyl lysine isopeptide (Lys-Gly) (interchain with G-Cter in SUMO1); alternate. A Glycyl lysine isopeptide (Lys-Gly) (interchain with G-Cter in SUMO2); alternate cross-link involves residue Lys268. At Ser304 the chain carries Phosphoserine.

It belongs to the SGT1 family. As to quaternary structure, probably associates with SCF (SKP1-CUL1-F-box protein) complex through interaction with SKP1. Interacts with S100A6. Interacts with HSP90. Post-translationally, phosphorylated at Ser-254 and Ser-304, dephosphorylation promotes nuclear translocation, most likely due to disruption of the SUGT1-HSP90 complex.

It localises to the cytoplasm. The protein localises to the nucleus. In terms of biological role, may play a role in ubiquitination and subsequent proteasomal degradation of target proteins. This is Protein SGT1 homolog from Bos taurus (Bovine).